A 301-amino-acid polypeptide reads, in one-letter code: uncharacterized protein (301 aa).

The next 9 helical transmembrane spans lie at 1-21 (MSWI…LGIV), 33-53 (SVLF…YFYY), 72-92 (AMSL…KIPG), 101-121 (FGII…TILI), 124-144 (FAWL…KTFY), 185-205 (YFTP…VFAI), 220-240 (IIYT…FCLA), 246-266 (FSYI…KIFI), and 270-290 (IAIP…FGII).

This sequence belongs to the TerC family.

It is found in the cell membrane. This is an uncharacterized protein from Rickettsia felis (strain ATCC VR-1525 / URRWXCal2) (Rickettsia azadi).